Here is a 506-residue protein sequence, read N- to C-terminus: 2-isopropylmalate synthase (506 aa).

Positions 4-266 constitute a Pyruvate carboxyltransferase domain; sequence ILFMDTTLRD…QSSIILKEIK (263 aa). Aspartate 13, histidine 201, histidine 203, and asparagine 237 together coordinate Mn(2+). The regulatory domain stretch occupies residues 390–506; the sequence is NIKQLQVHFV…KLKALLTLVK (117 aa).

This sequence belongs to the alpha-IPM synthase/homocitrate synthase family. LeuA type 1 subfamily. As to quaternary structure, homodimer. Mn(2+) is required as a cofactor.

The protein localises to the cytoplasm. It carries out the reaction 3-methyl-2-oxobutanoate + acetyl-CoA + H2O = (2S)-2-isopropylmalate + CoA + H(+). The protein operates within amino-acid biosynthesis; L-leucine biosynthesis; L-leucine from 3-methyl-2-oxobutanoate: step 1/4. Functionally, catalyzes the condensation of the acetyl group of acetyl-CoA with 3-methyl-2-oxobutanoate (2-ketoisovalerate) to form 3-carboxy-3-hydroxy-4-methylpentanoate (2-isopropylmalate). The chain is 2-isopropylmalate synthase from Bacillus cytotoxicus (strain DSM 22905 / CIP 110041 / 391-98 / NVH 391-98).